The primary structure comprises 273 residues: F-actin-capping protein subunit alpha (273 aa).

It belongs to the F-actin-capping protein alpha subunit family. Component of the F-actin capping complex, composed of a heterodimer of an alpha and a beta subunit.

The protein resides in the cytoplasm. The protein localises to the cytoskeleton. It is found in the actin patch. Functionally, F-actin-capping proteins bind in a Ca(2+)-independent manner to the fast growing ends of actin filaments (barbed end) thereby blocking the exchange of subunits at these ends. Unlike other capping proteins (such as gelsolin and severin), these proteins do not sever actin filaments. The sequence is that of F-actin-capping protein subunit alpha (cap1) from Aspergillus oryzae (strain ATCC 42149 / RIB 40) (Yellow koji mold).